Here is a 351-residue protein sequence, read N- to C-terminus: Heat shock factor protein HSF30 (351 aa).

The DNA-binding element occupies 29–123 (PPPFLSKTYE…LLKTIKRRRN (95 aa)).

This sequence belongs to the HSF family. Homotrimer. Exhibits temperature-dependent phosphorylation.

Its subcellular location is the nucleus. DNA-binding protein that specifically binds heat shock promoter elements (HSE) and activates transcription. This Solanum peruvianum (Peruvian tomato) protein is Heat shock factor protein HSF30 (HSF30).